The chain runs to 296 residues: Ribosomal RNA small subunit methyltransferase A (296 aa).

Basic and acidic residues predominate over residues 1-11 (MERSHVGRDCG). The tract at residues 1–24 (MERSHVGRDCGSRSSPRAFSVPTS) is disordered. The segment covering 12-24 (SRSSPRAFSVPTS) has biased composition (polar residues). 6 residues coordinate S-adenosyl-L-methionine: Asn43, Leu45, Gly70, Glu91, Asp113, and Asn135.

This sequence belongs to the class I-like SAM-binding methyltransferase superfamily. rRNA adenine N(6)-methyltransferase family. RsmA subfamily.

Its subcellular location is the cytoplasm. It carries out the reaction adenosine(1518)/adenosine(1519) in 16S rRNA + 4 S-adenosyl-L-methionine = N(6)-dimethyladenosine(1518)/N(6)-dimethyladenosine(1519) in 16S rRNA + 4 S-adenosyl-L-homocysteine + 4 H(+). Specifically dimethylates two adjacent adenosines (A1518 and A1519) in the loop of a conserved hairpin near the 3'-end of 16S rRNA in the 30S particle. May play a critical role in biogenesis of 30S subunits. The chain is Ribosomal RNA small subunit methyltransferase A from Salinibacter ruber (strain DSM 13855 / M31).